The chain runs to 436 residues: MRPGGERPVEGGACNGRSELELLKLRSAECIDEAAERLGALSRAIWSQPELAYEEHHAHRVLTHFFEREPPAASWAVQPHYQLPTAFRAEWEPPEARAPSATPRPLHLGFLCEYDALPGIGHACGHNLIAEVGAAAALGVRGALEGLPRPPPPVKVVVLGTPAEEDGGGKIDLIEAGAFTNLDVVFMAHPSQENAAYLPDMAEHDVTVKYYGKASHSASYPWEGLNALDAAVLAYNNLSVFRQQMKPTWRVHGIIKNGGVKPNIIPSYSELIYYFRAPSMKELQVLTKKAEDCFRAAALASGCTVEIKGGAHDYYNVLPNKSLWKAYMENGRKLGIEFISEDTMLNGPSGSTDFGNVSFVVPGIHPYFHIGSNALNHTEQYTEAAGSQEAQFYTLRTAKALAMTALDVIFKPELLEGIREDFKLKLQEEQFVNAVE.

It belongs to the peptidase M20A family.

The catalysed reaction is beta-alanyl-L-lysine + H2O = beta-alanine + L-lysine. The enzyme catalyses beta-alanyl-L-ornithine + H2O = beta-alanine + L-ornithine. It catalyses the reaction N(2)-(4-aminobutanoyl)-L-lysine + H2O = 4-aminobutanoate + L-lysine. It carries out the reaction N(2)-(4-aminobutanoyl)-L-ornithine + H2O = 4-aminobutanoate + L-ornithine. The catalysed reaction is N(2)-(4-aminobutanoyl)-L-arginine + H2O = 4-aminobutanoate + L-arginine. Functionally, catalyzes the peptide bond hydrolysis in dipeptides having basic amino acids lysine, ornithine or arginine at C-terminus. Postulated to function in a metabolite repair mechanism by eliminating alternate dipeptide by-products formed during carnosine synthesis. This Homo sapiens (Human) protein is Xaa-Arg dipeptidase.